The sequence spans 585 residues: Arginine--tRNA ligase (585 aa).

The 'HIGH' region motif lies at 126 to 136 (PNIAKEMHVGH).

It belongs to the class-I aminoacyl-tRNA synthetase family. As to quaternary structure, monomer.

The protein localises to the cytoplasm. It carries out the reaction tRNA(Arg) + L-arginine + ATP = L-arginyl-tRNA(Arg) + AMP + diphosphate. The sequence is that of Arginine--tRNA ligase from Rippkaea orientalis (strain PCC 8801 / RF-1) (Cyanothece sp. (strain PCC 8801)).